The following is a 123-amino-acid chain: D-ribose pyranase (123 aa).

The Proton donor role is filled by His20. Substrate contacts are provided by residues Asp28, His90, and 112–114 (YAN).

It belongs to the RbsD / FucU family. RbsD subfamily. As to quaternary structure, homodecamer.

The protein resides in the cytoplasm. It carries out the reaction beta-D-ribopyranose = beta-D-ribofuranose. Its pathway is carbohydrate metabolism; D-ribose degradation; D-ribose 5-phosphate from beta-D-ribopyranose: step 1/2. Functionally, catalyzes the interconversion of beta-pyran and beta-furan forms of D-ribose. In Corynebacterium glutamicum (strain R), this protein is D-ribose pyranase.